Consider the following 1246-residue polypeptide: Zinc finger protein 687a (1246 aa).

Residues 24–47 (KEAIQSDTHGNHNEHSSVVGKERS) are compositionally biased toward basic and acidic residues. The tract at residues 24 to 387 (KEAIQSDTHG…PTLVESASDA (364 aa)) is disordered. Composition is skewed to polar residues over residues 88–111 (GEFS…SSVP) and 163–195 (AFTN…FSSK). Over residues 287–301 (SSTNPTSLTSTNNLP) the composition is skewed to low complexity. The segment covering 302–317 (VEEKDLEHIIEERDSP) has biased composition (basic and acidic residues). The segment covering 326–338 (QSRTSLPSNSQGA) has biased composition (polar residues). Composition is skewed to basic and acidic residues over residues 341 to 350 (SKQRITREEA) and 360 to 375 (MQEK…EGKS). The C2H2-type 1 zinc finger occupies 587–619 (YRCLECGDAFALERSLARHYDRRSMRIEVTCNH). A C2H2-type 2; degenerate zinc finger spans residues 696–719 (HSCPECWSTFKGKQELVAHFQEVE). 3 C2H2-type zinc fingers span residues 817–840 (HKCP…ASQH), 854–876 (YKCV…IDTH), and 885–908 (FKCP…KDTH). The disordered stretch occupies residues 907–953 (THRETSNHDGTSTQNSLVKMESSDGEEWGRDEEEDKGKVSDANSAVP). Polar residues predominate over residues 914–923 (HDGTSTQNSL). The span at 929 to 940 (SDGEEWGRDEEE) shows a compositional bias: acidic residues. 2 C2H2-type zinc fingers span residues 958–981 (WSCS…TEQH) and 988–1011 (FPCT…RVKH). The C2H2-type 8; degenerate zinc finger occupies 1018–1044 (FYCQLCTGEKRSFSSKLILEKHIQAQH). The segment at 1045–1093 (AGERGTATQSQAVPQFTDGADSSSEHDAGVLGGSSVEPESRLAESTLTR) is disordered. C2H2-type zinc fingers lie at residues 1137 to 1160 (AQCQ…FISH) and 1210 to 1232 (HICK…FRTH).

This sequence belongs to the krueppel C2H2-type zinc-finger protein family. As to expression, widely expressed with highest levels in kidney, spleen and ovary.

It localises to the nucleus. Its function is as follows. May be involved in transcriptional regulation. This Danio rerio (Zebrafish) protein is Zinc finger protein 687a (znf687a).